A 329-amino-acid chain; its full sequence is Glucosyl-3-phosphoglycerate synthase (329 aa).

UDP-alpha-D-glucose is bound by residues 55–59 (PALDE), Ser-86, Lys-119, and 139–141 (DSD). Mn(2+) is bound at residue Asp-141. 189–192 (GRVT) is a (2R)-3-phosphoglycerate binding site. UDP-alpha-D-glucose is bound at residue 234–237 (YGVE). His-263 contributes to the Mn(2+) binding site. Asn-265 serves as a coordination point for (2R)-3-phosphoglycerate.

Belongs to the glycosyltransferase 2 family. Homodimer. The cofactor is Mg(2+). Mn(2+) serves as cofactor.

The enzyme catalyses an NDP-alpha-D-glucose + (2R)-3-phosphoglycerate = (2R)-2-O-(alpha-D-glucopyranosyl)-3-phospho-glycerate + a ribonucleoside 5'-diphosphate + H(+). The catalysed reaction is (2R)-3-phosphoglycerate + UDP-alpha-D-glucose = (2R)-2-O-(alpha-D-glucopyranosyl)-3-phospho-glycerate + UDP + H(+). It catalyses the reaction GDP-D-glucose + (2R)-3-phosphoglycerate = (2R)-2-O-(alpha-D-glucopyranosyl)-3-phospho-glycerate + GDP + H(+). Functionally, involved in the biosynthesis of 6-O-methylglucose lipopolysaccarides (MGLPs). Catalyzes the transfer of the glucose moiety from UDP-alpha-D-glucose (UDP-Glc) to the position 2 of 3-phospho-D-glycerate (3-PGA) to form glucosyl-3-phosphoglycerate (GPG). To a lesser extent can also use GDP-Glc but not UDP-Gal or UDP-GlcNAc as the sugar donor. This Mycolicibacterium paratuberculosis (strain ATCC BAA-968 / K-10) (Mycobacterium paratuberculosis) protein is Glucosyl-3-phosphoglycerate synthase.